The primary structure comprises 194 residues: dCTP deaminase (194 aa).

DCTP contacts are provided by residues 110–115 (RSSLAR), D128, 136–138 (VLE), Y171, K178, and Q182. E138 functions as the Proton donor/acceptor in the catalytic mechanism.

Belongs to the dCTP deaminase family. Homotrimer.

The catalysed reaction is dCTP + H2O + H(+) = dUTP + NH4(+). It participates in pyrimidine metabolism; dUMP biosynthesis; dUMP from dCTP (dUTP route): step 1/2. In terms of biological role, catalyzes the deamination of dCTP to dUTP. This chain is dCTP deaminase, found in Pseudoalteromonas translucida (strain TAC 125).